The primary structure comprises 504 residues: Amyloid-beta A4 precursor protein-binding family B member 3 (504 aa).

The 33-residue stretch at 29 to 61 folds into the WW domain; that stretch reads TGLPPGWRKIRDAAGTYYWHVPSGSTQWQRPTW. PID domains follow at residues 111–278 and 283–438; these read EPGA…QVEL and SQAA…RTSS.

In terms of assembly, interacts with APP (via intracellular domain). Interacts with APLP1 and APLP2 (via intracellular domain). Expressed predominantly in brain and testis.

It is found in the cytoplasm. The protein localises to the nucleus. May modulate the internalization of amyloid-beta precursor protein. This is Amyloid-beta A4 precursor protein-binding family B member 3 from Rattus norvegicus (Rat).